Here is a 216-residue protein sequence, read N- to C-terminus: Ribonuclease T (216 aa).

Residues 28–202 (VVVDVETGGF…YDTEQTARLF (175 aa)) enclose the Exonuclease domain. Positions 31, 33, 189, and 194 each coordinate Mg(2+). His-189 acts as the Proton donor/acceptor in catalysis.

This sequence belongs to the RNase T family. In terms of assembly, homodimer. It depends on Mg(2+) as a cofactor.

In terms of biological role, trims short 3' overhangs of a variety of RNA species, leaving a one or two nucleotide 3' overhang. Responsible for the end-turnover of tRNA: specifically removes the terminal AMP residue from uncharged tRNA (tRNA-C-C-A). Also appears to be involved in tRNA biosynthesis. The protein is Ribonuclease T of Xanthomonas campestris pv. campestris (strain 8004).